We begin with the raw amino-acid sequence, 1133 residues long: Lon protease homolog, mitochondrial (1133 aa).

The transit peptide at 1 to 37 (MLRTRTTKTLSTVARTTRAIQYYRSIAKTAAVSQRRF) directs the protein to the mitochondrion. The propeptide at 38–98 (ASTLTVRDVE…ATNSGKSILA (61 aa)) is removed in mature form; by autocatalysis. Basic and acidic residues-rich tracts occupy residues 98–117 (AKDD…VPDE) and 125–143 (EPTR…EASK). 2 disordered regions span residues 98–176 (AKDD…KDVP) and 282–358 (ELFP…LDDI). Over residues 145 to 166 (SRSSASGGGQSSSSRSDSGDGS) the composition is skewed to low complexity. The region spanning 182 to 480 (MLALPIARRP…KSLLVLKKEL (299 aa)) is the Lon N-terminal domain. 2 stretches are compositionally biased toward basic and acidic residues: residues 282-301 (ELFP…KDTD) and 325-340 (KLED…SELQ). A compositionally biased stretch (acidic residues) spans 348–358 (TEEESEELDDI). 632 to 639 (GPPGVGKT) is an ATP binding site. Residues 839 to 892 (KKLSIEDSPTSSADSKPKESVSSEEKAENNAKSSSEKTKDNNSEKTSDDIEALK) are dispensable for catalytic activity. Residues 844–889 (EDSPTSSADSKPKESVSSEEKAENNAKSSSEKTKDNNSEKTSDDIE) are disordered. A compositionally biased stretch (basic and acidic residues) spans 853-889 (SKPKESVSSEEKAENNAKSSSEKTKDNNSEKTSDDIE). Residues 923–1109 (TTPPGVVMGL…NDIFQKLFKD (187 aa)) form the Lon proteolytic domain. Residues serine 1015 and lysine 1058 contribute to the active site.

The protein belongs to the peptidase S16 family. Homohexamer. Organized in a ring with a central cavity. The ATP-binding and proteolytic domains (AP-domain) form a hexameric chamber. Oligomerization is independent of its proteolytic activity and the autocatalytic maturation of its subunits.

The protein localises to the mitochondrion matrix. The enzyme catalyses Hydrolysis of proteins in presence of ATP.. ATP-dependent serine protease that mediates the selective degradation of misfolded, unassembled or oxidatively damaged polypeptides as well as certain short-lived regulatory proteins in the mitochondrial matrix. May also have a chaperone function in the assembly of inner membrane protein complexes. Participates in the regulation of mitochondrial gene expression and in the maintenance of the integrity of the mitochondrial genome. Binds to mitochondrial DNA in a site-specific manner. Endogenous substrates include ABF2, ACO2, ILV1, ILV2, LSC1, LYS4, MGM101 and several oxidized proteins. The 2 nucleic acid-binding proteins ABF2 and MGM101 are protected from degradation by PIM1 when they are bound to DNA. This is Lon protease homolog, mitochondrial from Saccharomyces cerevisiae (strain ATCC 204508 / S288c) (Baker's yeast).